Here is a 146-residue protein sequence, read N- to C-terminus: Hemoglobin subunit delta (146 aa).

In terms of domain architecture, Globin spans 2 to 146 (HLTGDEKSAV…VATALAHKYH (145 aa)). Residue S50 is modified to Phosphoserine. Heme b-binding residues include H63 and H92.

It belongs to the globin family. As to quaternary structure, heterotetramer of two delta chains and two alpha chains. As to expression, red blood cells.

The protein is Hemoglobin subunit delta (HBD) of Saimiri sciureus (Common squirrel monkey).